Consider the following 139-residue polypeptide: Ribonuclease VapC36 (139 aa).

One can recognise a PINc domain in the interval 1–127 (MIVDTSAVVA…GNDFPQTDLE (127 aa)). D4 and D100 together coordinate Mg(2+).

It belongs to the PINc/VapC protein family. Requires Mg(2+) as cofactor.

Its function is as follows. Toxic component of a type II toxin-antitoxin (TA) system. An RNase. Its cognate antitoxin is VapB36. This chain is Ribonuclease VapC36, found in Mycobacterium tuberculosis (strain ATCC 25618 / H37Rv).